A 795-amino-acid polypeptide reads, in one-letter code: Protocadherin beta-12 (795 aa).

Residues 1-26 (MENGGAGTLQIRQVLLFFVLLGMSQA) form the signal peptide. Over 27-690 (GSETGNFLVM…AQADSLTVYL (664 aa)) the chain is Extracellular. Cadherin domains lie at 35–133 (VMEE…SPVF), 138–242 (MLLE…SPEF), 247–347 (YEVK…APEI), 352–451 (ITSP…APAF), and 456–561 (YALF…SPFV). N-linked (GlcNAc...) asparagine glycans are attached at residues asparagine 418, asparagine 436, asparagine 487, and asparagine 567. Positions 568–671 (GSAPCTELVP…LVDGFSQPYL (104 aa)) constitute a Cadherin 6 domain. A helical transmembrane segment spans residues 691-711 (VVALASVSSLFLFSVLLFVAV). The Cytoplasmic segment spans residues 712–795 (RLCRRSRAAP…NPPFQNNLGF (84 aa)).

The protein resides in the cell membrane. Its function is as follows. Potential calcium-dependent cell-adhesion protein. May be involved in the establishment and maintenance of specific neuronal connections in the brain. This Homo sapiens (Human) protein is Protocadherin beta-12 (PCDHB12).